A 632-amino-acid polypeptide reads, in one-letter code: 1-deoxy-D-xylulose-5-phosphate synthase (632 aa).

Residues His79 and 120 to 122 (GHA) each bind thiamine diphosphate. A Mg(2+)-binding site is contributed by Asp152. Thiamine diphosphate contacts are provided by residues 153–154 (GS), Asn181, Phe293, and Glu377. Position 181 (Asn181) interacts with Mg(2+).

The protein belongs to the transketolase family. DXPS subfamily. As to quaternary structure, homodimer. It depends on Mg(2+) as a cofactor. Thiamine diphosphate serves as cofactor.

The enzyme catalyses D-glyceraldehyde 3-phosphate + pyruvate + H(+) = 1-deoxy-D-xylulose 5-phosphate + CO2. Its pathway is metabolic intermediate biosynthesis; 1-deoxy-D-xylulose 5-phosphate biosynthesis; 1-deoxy-D-xylulose 5-phosphate from D-glyceraldehyde 3-phosphate and pyruvate: step 1/1. Catalyzes the acyloin condensation reaction between C atoms 2 and 3 of pyruvate and glyceraldehyde 3-phosphate to yield 1-deoxy-D-xylulose-5-phosphate (DXP). This chain is 1-deoxy-D-xylulose-5-phosphate synthase, found in Phocaeicola vulgatus (strain ATCC 8482 / DSM 1447 / JCM 5826 / CCUG 4940 / NBRC 14291 / NCTC 11154) (Bacteroides vulgatus).